The sequence spans 257 residues: Snake venom serine protease KN1 (257 aa).

The signal sequence occupies residues 1–18 (MVLIRVLANLLILQLSYA). A propeptide spanning residues 19 to 24 (QKSSEL) is cleaved from the precursor. Residues 25-248 (VVGGHPCNIN…HLDWIKSIIA (224 aa)) enclose the Peptidase S1 domain. Cystine bridges form between cysteine 31–cysteine 162, cysteine 49–cysteine 65, cysteine 141–cysteine 209, cysteine 173–cysteine 188, and cysteine 199–cysteine 224. Residue histidine 64 is the Charge relay system of the active site. Asparagine 102 is a glycosylation site (N-linked (GlcNAc...) asparagine). Aspartate 109 functions as the Charge relay system in the catalytic mechanism. N-linked (GlcNAc...) asparagine glycans are attached at residues asparagine 120 and asparagine 121. Serine 203 (charge relay system) is an active-site residue.

Belongs to the peptidase S1 family. Snake venom subfamily. In terms of assembly, monomer. Expressed by the venom gland.

The protein resides in the secreted. In terms of biological role, snake venom serine protease that may act in the hemostasis system of the prey. The protein is Snake venom serine protease KN1 of Trimeresurus stejnegeri (Chinese green tree viper).